The primary structure comprises 92 residues: MHGNRPSLKDITLILDEIPEIVDLHCDEQFDSSEEENNHQLTEPDVQAYGVVTTCCKCGRTVRLVVECGQADLRELEQLFLKTLTLVCPHCA.

An E7 terminal domain region spans residues 1–43 (MHGNRPSLKDITLILDEIPEIVDLHCDEQFDSSEEENNHQLTE). The short motif at 24–28 (LHCDE) is the LXCXE motif; interaction with host RB1 and TMEM173/STING element. Residues 55-91 (CCKCGRTVRLVVECGQADLRELEQLFLKTLTLVCPHC) fold into a zinc finger. Positions 73–81 (LRELEQLFL) match the Nuclear export signal motif.

This sequence belongs to the papillomaviridae E7 protein family. As to quaternary structure, homodimer. Homooligomer. Interacts with host RB1; this interaction induces dissociation of RB1-E2F1 complex thereby disrupting RB1 activity. Interacts with host EP300; this interaction represses EP300 transcriptional activity. Interacts with protein E2; this interaction inhibits E7 oncogenic activity. Interacts with host TMEM173/STING; this interaction impairs the ability of TMEM173/STING to sense cytosolic DNA and promote the production of type I interferon (IFN-alpha and IFN-beta). Highly phosphorylated.

The protein localises to the host cytoplasm. It localises to the host nucleus. In terms of biological role, plays a role in viral genome replication by driving entry of quiescent cells into the cell cycle. Stimulation of progression from G1 to S phase allows the virus to efficiently use the cellular DNA replicating machinery to achieve viral genome replication. E7 protein has both transforming and trans-activating activities. Induces the disassembly of the E2F1 transcription factor from RB1, with subsequent transcriptional activation of E2F1-regulated S-phase genes. Interferes with host histone deacetylation mediated by HDAC1 and HDAC2, leading to transcription activation. Also plays a role in the inhibition of both antiviral and antiproliferative functions of host interferon alpha. Interaction with host TMEM173/STING impairs the ability of TMEM173/STING to sense cytosolic DNA and promote the production of type I interferon (IFN-alpha and IFN-beta). This is Protein E7 from Homo sapiens (Human).